Here is a 200-residue protein sequence, read N- to C-terminus: V-type proton ATPase subunit E (200 aa).

Belongs to the V-ATPase E subunit family.

Its function is as follows. Produces ATP from ADP in the presence of a proton gradient across the membrane. The sequence is that of V-type proton ATPase subunit E from Thermoanaerobacter pseudethanolicus (strain ATCC 33223 / 39E) (Clostridium thermohydrosulfuricum).